We begin with the raw amino-acid sequence, 389 residues long: Succinate--CoA ligase [ADP-forming] subunit beta (389 aa).

One can recognise an ATP-grasp domain in the interval 9 to 236 (KELFAKHEVP…KDATDPLELK (228 aa)). ATP is bound by residues K45, 52–54 (GRG), S94, and E99. Mg(2+)-binding residues include N191 and D205. Residues N256 and 318-320 (GIT) each bind substrate.

It belongs to the succinate/malate CoA ligase beta subunit family. In terms of assembly, heterotetramer of two alpha and two beta subunits. Mg(2+) serves as cofactor.

The catalysed reaction is succinate + ATP + CoA = succinyl-CoA + ADP + phosphate. It carries out the reaction GTP + succinate + CoA = succinyl-CoA + GDP + phosphate. Its pathway is carbohydrate metabolism; tricarboxylic acid cycle; succinate from succinyl-CoA (ligase route): step 1/1. In terms of biological role, succinyl-CoA synthetase functions in the citric acid cycle (TCA), coupling the hydrolysis of succinyl-CoA to the synthesis of either ATP or GTP and thus represents the only step of substrate-level phosphorylation in the TCA. The beta subunit provides nucleotide specificity of the enzyme and binds the substrate succinate, while the binding sites for coenzyme A and phosphate are found in the alpha subunit. The chain is Succinate--CoA ligase [ADP-forming] subunit beta from Rhodococcus jostii (strain RHA1).